Consider the following 562-residue polypeptide: Dihydroxy-acid dehydratase (562 aa).

Residue Asp78 participates in Mg(2+) binding. Residue Cys119 coordinates [2Fe-2S] cluster. Mg(2+)-binding residues include Asp120 and Lys121. Lys121 bears the N6-carboxylysine mark. Cys192 lines the [2Fe-2S] cluster pocket. Glu450 is a Mg(2+) binding site. Ser476 functions as the Proton acceptor in the catalytic mechanism.

The protein belongs to the IlvD/Edd family. As to quaternary structure, homodimer. [2Fe-2S] cluster is required as a cofactor. Requires Mg(2+) as cofactor.

The catalysed reaction is (2R)-2,3-dihydroxy-3-methylbutanoate = 3-methyl-2-oxobutanoate + H2O. It carries out the reaction (2R,3R)-2,3-dihydroxy-3-methylpentanoate = (S)-3-methyl-2-oxopentanoate + H2O. It participates in amino-acid biosynthesis; L-isoleucine biosynthesis; L-isoleucine from 2-oxobutanoate: step 3/4. Its pathway is amino-acid biosynthesis; L-valine biosynthesis; L-valine from pyruvate: step 3/4. In terms of biological role, functions in the biosynthesis of branched-chain amino acids. Catalyzes the dehydration of (2R,3R)-2,3-dihydroxy-3-methylpentanoate (2,3-dihydroxy-3-methylvalerate) into 2-oxo-3-methylpentanoate (2-oxo-3-methylvalerate) and of (2R)-2,3-dihydroxy-3-methylbutanoate (2,3-dihydroxyisovalerate) into 2-oxo-3-methylbutanoate (2-oxoisovalerate), the penultimate precursor to L-isoleucine and L-valine, respectively. This chain is Dihydroxy-acid dehydratase, found in Nautilia profundicola (strain ATCC BAA-1463 / DSM 18972 / AmH).